The primary structure comprises 367 residues: uncharacterized protein (367 aa).

The protein belongs to the mimivirus L17x/L18x family.

This is an uncharacterized protein from Acanthamoeba polyphaga mimivirus (APMV).